The chain runs to 444 residues: Aspartate--tRNA(Asp/Asn) ligase (444 aa).

L-aspartate is bound at residue Glu176. Residues 198-201 (QLFK) are aspartate. Arg220 lines the L-aspartate pocket. Residues 220–222 (RAE), 228–230 (RHL), and Glu367 contribute to the ATP site. Residues Glu367 and Ser370 each contribute to the Mg(2+) site. Residues Ser370 and Arg374 each coordinate L-aspartate. 415–418 (GCER) contacts ATP.

This sequence belongs to the class-II aminoacyl-tRNA synthetase family. Type 2 subfamily. Homodimer. Mg(2+) is required as a cofactor.

Its subcellular location is the cytoplasm. It catalyses the reaction tRNA(Asx) + L-aspartate + ATP = L-aspartyl-tRNA(Asx) + AMP + diphosphate. In terms of biological role, aspartyl-tRNA synthetase with relaxed tRNA specificity since it is able to aspartylate not only its cognate tRNA(Asp) but also tRNA(Asn). Reaction proceeds in two steps: L-aspartate is first activated by ATP to form Asp-AMP and then transferred to the acceptor end of tRNA(Asp/Asn). This chain is Aspartate--tRNA(Asp/Asn) ligase, found in Methanosarcina acetivorans (strain ATCC 35395 / DSM 2834 / JCM 12185 / C2A).